We begin with the raw amino-acid sequence, 354 residues long: Carbonic anhydrase 12 (354 aa).

A signal peptide spans 1 to 24 (MPHRSLRATVVLLLVILKKQPSSS). At 25-301 (APLNGSKWTY…QGLLTDTGLS (277 aa)) the chain is on the extracellular side. Residues Asn28, Asn42, Asn80, and Asn88 are each glycosylated (N-linked (GlcNAc...) asparagine). One can recognise an Alpha-carbonic anhydrase domain in the interval 30 to 290 (SKWTYVGPAG…FDERLVYISF (261 aa)). The cysteines at positions 50 and 231 are disulfide-linked. His94 functions as the Proton donor/acceptor in the catalytic mechanism. 3 residues coordinate Zn(2+): His120, His122, and His146. 227–228 (TT) lines the substrate pocket. The chain crosses the membrane as a helical span at residues 302–322 (LGIILSVALAGVLGISIVLAV). The Cytoplasmic portion of the chain corresponds to 323 to 354 (SIWLFKRKKSKKGDNKGVIYKPAIKKEAEVHA).

The protein belongs to the alpha-carbonic anhydrase family. Homodimer. Requires Zn(2+) as cofactor.

The protein resides in the membrane. It localises to the cell membrane. The enzyme catalyses hydrogencarbonate + H(+) = CO2 + H2O. With respect to regulation, inhibited by acetazolamide. Its function is as follows. Reversible hydration of carbon dioxide. In Mus musculus (Mouse), this protein is Carbonic anhydrase 12.